A 211-amino-acid polypeptide reads, in one-letter code: Probable nicotinate-nucleotide adenylyltransferase (211 aa).

Belongs to the NadD family.

It carries out the reaction nicotinate beta-D-ribonucleotide + ATP + H(+) = deamido-NAD(+) + diphosphate. Its pathway is cofactor biosynthesis; NAD(+) biosynthesis; deamido-NAD(+) from nicotinate D-ribonucleotide: step 1/1. Its function is as follows. Catalyzes the reversible adenylation of nicotinate mononucleotide (NaMN) to nicotinic acid adenine dinucleotide (NaAD). This Cellvibrio japonicus (strain Ueda107) (Pseudomonas fluorescens subsp. cellulosa) protein is Probable nicotinate-nucleotide adenylyltransferase.